The following is a 1144-amino-acid chain: Type II inositol polyphosphate 5-phosphatase 14 (1144 aa).

2 disordered regions span residues alanine 15–serine 67 and glycine 81–glutamate 118. WD repeat units follow at residues glutamate 158–cysteine 196, valine 216–alanine 255, alanine 269–valine 307, glutamate 445–valine 483, and serine 524–serine 561. Catalytic regions lie at residues aspartate 791–threonine 807 and lysine 870–asparagine 885. Lysine 949 participates in a covalent cross-link: Glycyl lysine isopeptide (Lys-Gly) (interchain with G-Cter in ubiquitin). A compositionally biased stretch (polar residues) spans threonine 1111–glycine 1131. Positions threonine 1111 to glycine 1144 are disordered. Residues histidine 1135 to glycine 1144 are compositionally biased toward basic and acidic residues.

This sequence belongs to the inositol polyphosphate 5-phosphatase family. Requires Mg(2+) as cofactor. As to expression, expressed in young seedlings and flowers.

It catalyses the reaction a 1,2-diacyl-sn-glycero-3-phospho-(1D-myo-inositol-4,5-bisphosphate) + H2O = a 1,2-diacyl-sn-glycero-3-phospho-(1D-myo-inositol 4-phosphate) + phosphate. It carries out the reaction a 1,2-diacyl-sn-glycero-3-phospho-(1D-myo-inositol-3,4,5-trisphosphate) + H2O = a 1,2-diacyl-sn-glycero-3-phospho-(1D-myo-inositol-3,4-bisphosphate) + phosphate. The enzyme catalyses 1D-myo-inositol 1,4,5-trisphosphate + H2O = 1D-myo-inositol 1,4-bisphosphate + phosphate. Has phosphatase activity toward PtdIns(4,5)P2, PtdIns(3,4,5)P3 and Ins(1,4,5)P3. This chain is Type II inositol polyphosphate 5-phosphatase 14, found in Arabidopsis thaliana (Mouse-ear cress).